Here is a 319-residue protein sequence, read N- to C-terminus: RNA polymerase II holoenzyme cyclin-like subunit (319 aa).

The 90-residue stretch at 53 to 142 folds into the Cyclin N-terminal domain; the sequence is QQLIRLAKRL…LGECEFFMIS (90 aa). A compositionally biased stretch (low complexity) spans 237–251; sequence QGQQAQGGMPEPAAA. The interval 237–261 is disordered; sequence QGQQAQGGMPEPAAAEPKEKRQQDR. The segment covering 252 to 261 has biased composition (basic and acidic residues); the sequence is EPKEKRQQDR.

Belongs to the cyclin family. Cyclin C subfamily. Component of the SRB8-11 complex, a regulatory module of the Mediator complex. Interacts with SSN3/FCK1.

It is found in the nucleus. Component of the SRB8-11 complex. The SRB8-11 complex is a regulatory module of the Mediator complex which is itself involved in regulation of basal and activated RNA polymerase II-dependent transcription. The SRB8-11 complex may be involved in the transcriptional repression of a subset of genes regulated by Mediator. It may inhibit the association of the Mediator complex with RNA polymerase II to form the holoenzyme complex. The SRB8-11 complex phosphorylates the C-terminal domain (CTD) of the largest subunit of RNA polymerase II. May play a role in signal transduction pathways regulating secondary metabolism and fungal development (conidiation). The chain is RNA polymerase II holoenzyme cyclin-like subunit (SSN8) from Gibberella moniliformis (Maize ear and stalk rot fungus).